A 463-amino-acid polypeptide reads, in one-letter code: Probable glucan endo-1,3-beta-glucosidase eglC (463 aa).

The first 18 residues, 1-18 (MQLTHLLAFALSLATSEA), serve as a signal peptide directing secretion. Asn84 carries N-linked (GlcNAc...) asparagine glycosylation. The active-site Proton donor is Glu128. Asn183 carries N-linked (GlcNAc...) asparagine glycosylation. Glu239 serves as the catalytic Nucleophile. An N-linked (GlcNAc...) asparagine glycan is attached at Asn312. Disordered stretches follow at residues 317 to 354 (SASA…SSAV) and 396 to 430 (SGSS…NSGA). The GPI-anchor amidated glycine moiety is linked to residue Gly440. Positions 441–463 (GASSVSGSVFGALVAVFAFVATL) are cleaved as a propeptide — removed in mature form.

This sequence belongs to the glycosyl hydrolase 17 family. The GPI-anchor is attached to the protein in the endoplasmic reticulum and serves to target the protein to the cell surface. There, the glucosamine-inositol phospholipid moiety is cleaved off and the GPI-modified mannoprotein is covalently attached via its lipidless GPI glycan remnant to the 1,6-beta-glucan of the outer cell wall layer.

Its subcellular location is the cell membrane. The protein localises to the secreted. It is found in the cell wall. It catalyses the reaction Hydrolysis of (1-&gt;3)-beta-D-glucosidic linkages in (1-&gt;3)-beta-D-glucans.. Glucanases play a role in cell expansion during growth, in cell-cell fusion during mating, and in spore release during sporulation. This enzyme may be involved in beta-glucan degradation and also function biosynthetically as a transglycosylase. This is Probable glucan endo-1,3-beta-glucosidase eglC (eglC) from Aspergillus oryzae (strain ATCC 42149 / RIB 40) (Yellow koji mold).